Reading from the N-terminus, the 83-residue chain is Erabutoxin b (83 aa).

An N-terminal signal peptide occupies residues 1–21; sequence MKTLLLTLVVVTIVCLDLGYT. The interval 24-38 is loop I; that stretch reads CFNHQSSQPQTTKTC. 4 disulfides stabilise this stretch: Cys-24–Cys-45, Cys-38–Cys-62, Cys-64–Cys-75, and Cys-76–Cys-81. A stretch between loop I and loop II region spans residues 39–44; that stretch reads SPGESS. The segment at 45 to 62 is loop II; the sequence is CYHKQWSDFRGTIIERGC. A loop III region spans residues 64–75; sequence CPTVKPGIKLSC.

The protein belongs to the three-finger toxin family. Short-chain subfamily. Type I alpha-neurotoxin sub-subfamily. In terms of tissue distribution, expressed by the venom gland.

The protein resides in the secreted. In terms of biological role, binds with high affinity to muscular nicotinic acetylcholine receptors (nAChRs) (tested on Torpedo marmorata, Kd=0.07 nM), and with low affinity to neuronal alpha-7/CHRNA7 nAChRs (tested on chimeric alpha-7/CHRNA7, Kd=22 uM) and inhibit acetylcholine from binding to the receptor, thereby impairing neuromuscular transmission. Produces peripheral paralysis by blocking neuromuscular transmission at the postsynaptic site. The sequence is that of Erabutoxin b from Laticauda semifasciata (Black-banded sea krait).